A 1080-amino-acid chain; its full sequence is Presequence protease 2, chloroplastic/mitochondrial (1080 aa).

Residues 1–84 constitute a chloroplast and mitochondrion transit peptide; sequence MLRSLTCSST…NGQFSRLSIR (84 aa). A Zn(2+)-binding site is contributed by histidine 161. The active-site Proton acceptor is glutamate 164. A Zn(2+)-binding site is contributed by histidine 165. The active site involves glutamate 239. Glutamate 261 serves as a coordination point for Zn(2+). Arginine 704 is a binding site for Mg(2+).

Belongs to the peptidase M16 family. PreP subfamily. In terms of assembly, homodimer. It depends on Zn(2+) as a cofactor. Requires Mg(2+) as cofactor. In terms of tissue distribution, expressed in leaves, flowers and roots, but not detected in siliques and shoots.

It is found in the plastid. It localises to the chloroplast stroma. The protein localises to the mitochondrion matrix. With respect to regulation, completely inhibited by the metal chelator orthophenanthroline. Its function is as follows. ATP-independent protease that degrades both mitochondrial and chloroplastic transit peptides after their cleavage. Also degrades other unstructured peptides. Specific for peptides in the range of 10 to 65 residues. Shows a preference for cleavage after small polar residues and before basic residues, but without any positional preference. The polypeptide is Presequence protease 2, chloroplastic/mitochondrial (PREP2) (Arabidopsis thaliana (Mouse-ear cress)).